Here is a 1466-residue protein sequence, read N- to C-terminus: Retrovirus-related Pol polyprotein from transposon RE1 (1466 aa).

Positions 227-270 are disordered; that stretch reads SHRNTTTTNNNNNGNRNNRYDNRNNNNNSKPWQQSSTNFHPNNN. Residues 229–254 are compositionally biased toward low complexity; sequence RNTTTTNNNNNGNRNNRYDNRNNNNN. Polar residues predominate over residues 255–270; the sequence is SKPWQQSSTNFHPNNN. The segment at 278 to 294 adopts a CCHC-type zinc-finger fold; sequence KCQICGVQGHSAKRCSQ. Asp334 functions as the For protease activity in the catalytic mechanism. The region spanning 519 to 682 is the Integrase catalytic domain; it reads NSTRPLEYIY…SPFQKLFGTS (164 aa). Mg(2+) contacts are provided by Asp530 and Asp592. The segment at 772-927 is disordered; it reads WSPHTTLPTR…NNNQAPLNTH (156 aa). Low complexity-rich tracts occupy residues 796 to 827 and 836 to 898; these read AATP…SFPS and QNGP…SSTS. Residues 899–912 show a composition bias toward pro residues; that stretch reads PTPPSILIHPPPPL. Residues 915 to 927 are compositionally biased toward polar residues; the sequence is IVNNNNQAPLNTH. The Reverse transcriptase Ty1/copia-type domain maps to 982-1225; it reads NHTWDLVPPP…ITAKPVTTPM (244 aa).

The enzyme catalyses DNA(n) + a 2'-deoxyribonucleoside 5'-triphosphate = DNA(n+1) + diphosphate. This Arabidopsis thaliana (Mouse-ear cress) protein is Retrovirus-related Pol polyprotein from transposon RE1 (RE1).